A 431-amino-acid polypeptide reads, in one-letter code: Pheromone alpha factor receptor (431 aa).

Over M1–V49 the chain is Extracellular. N25 and N32 each carry an N-linked (GlcNAc...) asparagine glycan. The helical transmembrane segment at T50–T72 threads the bilayer. The Glycine zipper motif signature appears at I53 to A61. The Cytoplasmic segment spans residues S73 to T78. The chain crosses the membrane as a helical span at residues P79–L102. Residues L103 to N132 are Extracellular-facing. A helical membrane pass occupies residues I133–G156. The Cytoplasmic segment spans residues D157–G163. Residues L164–G188 form a helical membrane-spanning segment. The Extracellular segment spans residues M189 to N205. A helical membrane pass occupies residues A206–I230. At R231–F241 the chain is on the cytoplasmic side. The chain crosses the membrane as a helical span at residues D242–Y266. Residues S267–D275 are Extracellular-facing. A helical transmembrane segment spans residues V276 to A299. Residues N300–L431 are Cytoplasmic-facing. S310 and S315 each carry phosphoserine. Position 329 is a phosphothreonine (T329). The residue at position 331 (S331) is a Phosphoserine. Residue K337 forms a Glycyl lysine isopeptide (Lys-Gly) (interchain with G-Cter in ubiquitin) linkage. At S360 the chain carries Phosphoserine. T363 bears the Phosphothreonine mark. S366 bears the Phosphoserine mark. K374 participates in a covalent cross-link: Glycyl lysine isopeptide (Lys-Gly) (interchain with G-Cter in ubiquitin). Polar residues predominate over residues Q379–T389. The interval Q379–P406 is disordered. Residue T382 is modified to Phosphothreonine. A phosphoserine mark is found at S385 and S386. K400 participates in a covalent cross-link: Glycyl lysine isopeptide (Lys-Gly) (interchain with G-Cter in ubiquitin). 2 positions are modified to phosphothreonine: T411 and T414. K422 participates in a covalent cross-link: Glycyl lysine isopeptide (Lys-Gly) (interchain with G-Cter in ubiquitin).

The protein belongs to the G-protein coupled receptor 4 family. In terms of assembly, homodimer. Might also for higher order homooligomers such as homotetramers. Oligomerization is mediated significantly by transmembrane domain 1 (TMD1), possibly in concert with the N-terminal extracellular domain and TMD2. Interaction with GPA1, its dedicated G-alpha protein. Post-translationally, undergoes hyperphosphorylation of the C-terminal cytoplasmic domain after binding of the alpha-factor, which leads to internalization by endocytosis. In terms of processing, monoubiquitination at Lys-337 triggers internalization of STE2. N-glycosylated. N-glycosylation may be involved in the sorting process for misfolded STE2 protein. As to expression, expressed in MATa strains but not in MATalpha strains.

Its subcellular location is the cell membrane. In terms of biological role, fungal class D1 G-protein-coupled receptor that acts as an alpha-factor pheromone receptor performing pheromone-dependent signal transduction involved in cellular conjugation, mating projection assembly, and in cell fusion. Following alpha-factor-binding, the signal is transmitted via a tripartite G protein consisting of alpha-, beta- and gamma-subunits (GAP1, STE4 and STE8 respectively) that prepares the cell for conjugation. In the inactive state, the cytoplasmic end of transmembrane domain 7 (TMD7) is unstructured and packs between TMD1-6, blocking the G protein coupling site. Agonist binding results in the outward movement of the extracellular ends of TMD6 and TMD7 by 6 Angstroms. On the intracellular surface, the G protein coupling site is formed by a 20 Angstroms outward movement of the unstructured region in TMD7 that unblocks the site, and a 12 Angstroms inward movement of TMD6. The protein is Pheromone alpha factor receptor (STE2) of Saccharomyces cerevisiae (strain ATCC 204508 / S288c) (Baker's yeast).